Consider the following 545-residue polypeptide: Ribosomal protein uS12 methylthiotransferase RimO (545 aa).

The MTTase N-terminal domain occupies 7–129 (RRVALVTLGC…IGEHLDAVLG (123 aa)). [4Fe-4S] cluster contacts are provided by C16, C52, C92, C197, C201, and C204. The Radical SAM core domain maps to 183–414 (LTAGPVAALK…DLVEQLTATR (232 aa)). Residues 416-510 (QERIGSRVQV…GVDLVAEFTA (95 aa)) enclose the TRAM domain. Disordered regions lie at residues 454-486 (LPGP…QPGV) and 516-545 (RPSA…ADGT). A compositionally biased stretch (low complexity) spans 455–464 (PGPAGAAAGP).

The protein belongs to the methylthiotransferase family. RimO subfamily. [4Fe-4S] cluster is required as a cofactor.

It is found in the cytoplasm. The catalysed reaction is L-aspartate(89)-[ribosomal protein uS12]-hydrogen + (sulfur carrier)-SH + AH2 + 2 S-adenosyl-L-methionine = 3-methylsulfanyl-L-aspartate(89)-[ribosomal protein uS12]-hydrogen + (sulfur carrier)-H + 5'-deoxyadenosine + L-methionine + A + S-adenosyl-L-homocysteine + 2 H(+). Catalyzes the methylthiolation of an aspartic acid residue of ribosomal protein uS12. In Frankia alni (strain DSM 45986 / CECT 9034 / ACN14a), this protein is Ribosomal protein uS12 methylthiotransferase RimO.